Here is a 443-residue protein sequence, read N- to C-terminus: Xaa-Pro dipeptidase (443 aa).

5 residues coordinate Mn(2+): Asp246, Asp257, His339, Glu384, and Glu423.

Belongs to the peptidase M24B family. Bacterial-type prolidase subfamily. It depends on Mn(2+) as a cofactor.

It catalyses the reaction Xaa-L-Pro dipeptide + H2O = an L-alpha-amino acid + L-proline. In terms of biological role, splits dipeptides with a prolyl residue in the C-terminal position. This Shigella dysenteriae serotype 1 (strain Sd197) protein is Xaa-Pro dipeptidase.